The sequence spans 237 residues: Probable transcriptional regulatory protein Exig_1693 (237 aa).

It belongs to the TACO1 family. YeeN subfamily.

The protein localises to the cytoplasm. The sequence is that of Probable transcriptional regulatory protein Exig_1693 from Exiguobacterium sibiricum (strain DSM 17290 / CCUG 55495 / CIP 109462 / JCM 13490 / 255-15).